Here is a 254-residue protein sequence, read N- to C-terminus: Phosphoglycerate mutase 1 (254 aa).

Residues 10–17 and 23–24 contribute to the substrate site; these read RHGESTWN and SG. His-11 functions as the Tele-phosphohistidine intermediate in the catalytic mechanism. Residues Ser-14 and Ser-23 each carry the phosphoserine modification. Residue Tyr-26 is modified to Phosphotyrosine. Ser-31 carries the post-translational modification Phosphoserine. Substrate is bound by residues Arg-62, 89-92, and Lys-100; that span reads ERHY. Residue Glu-89 is the Proton donor/acceptor of the active site. Position 106 is an N6-acetyllysine (Lys-106). Residue 116-117 coordinates substrate; the sequence is RR. Ser-118 carries the phosphoserine modification. 187–188 serves as a coordination point for substrate; it reads GN. Lys-251 is subject to N6-acetyllysine; alternate. Lys-251 is modified (N6-succinyllysine; alternate). Residues Lys-253 and Lys-254 each carry the N6-acetyllysine modification.

It belongs to the phosphoglycerate mutase family. BPG-dependent PGAM subfamily. As to quaternary structure, homodimer. Acetylated at Lys-253, Lys-253 and Lys-254 under high glucose condition. Acetylation increases catalytic activity. Under glucose restriction SIRT1 levels dramatically increase and it deacetylates the enzyme.

It catalyses the reaction (2R)-2-phosphoglycerate = (2R)-3-phosphoglycerate. The enzyme catalyses (2R)-3-phospho-glyceroyl phosphate = (2R)-2,3-bisphosphoglycerate + H(+). Its function is as follows. Catalyzes the interconversion of 2-phosphoglycerate and 3-phosphoglyceratea crucial step in glycolysis, by using 2,3-bisphosphoglycerate. Also catalyzes the interconversion of (2R)-2,3-bisphosphoglycerate and (2R)-3-phospho-glyceroyl phosphate. The sequence is that of Phosphoglycerate mutase 1 from Bos taurus (Bovine).